A 747-amino-acid polypeptide reads, in one-letter code: AMP deaminase 1 (747 aa).

Position 81 is a phosphothreonine (T81). The residue at position 85 (S85) is a Phosphoserine. Position 216 is a phosphotyrosine (Y216). The Zn(2+) site is built by H303 and H305. Substrate contacts are provided by residues H305 and 374–379; that span reads KFNDKY. S441 is modified (phosphoserine). Zn(2+) is bound at residue H572. E575 serves as a coordination point for substrate. H594 serves as the catalytic Proton acceptor. A Zn(2+)-binding site is contributed by D649. Residue 650-653 participates in substrate binding; the sequence is DPMQ.

The protein belongs to the metallo-dependent hydrolases superfamily. Adenosine and AMP deaminases family. In terms of assembly, homotetramer. The cofactor is Zn(2+).

The enzyme catalyses AMP + H2O + H(+) = IMP + NH4(+). The protein operates within purine metabolism; IMP biosynthesis via salvage pathway; IMP from AMP: step 1/1. Its function is as follows. AMP deaminase plays a critical role in energy metabolism. The sequence is that of AMP deaminase 1 from Rattus norvegicus (Rat).